The chain runs to 181 residues: Probable nicotinate-nucleotide adenylyltransferase (181 aa).

Belongs to the NadD family.

It carries out the reaction nicotinate beta-D-ribonucleotide + ATP + H(+) = deamido-NAD(+) + diphosphate. The protein operates within cofactor biosynthesis; NAD(+) biosynthesis; deamido-NAD(+) from nicotinate D-ribonucleotide: step 1/1. Catalyzes the reversible adenylation of nicotinate mononucleotide (NaMN) to nicotinic acid adenine dinucleotide (NaAD). This is Probable nicotinate-nucleotide adenylyltransferase from Campylobacter jejuni subsp. jejuni serotype O:23/36 (strain 81-176).